The following is a 418-amino-acid chain: CCA-adding enzyme (418 aa).

Positions 54 and 57 each coordinate ATP. Positions 54 and 57 each coordinate CTP. Positions 66, 68, and 118 each coordinate Mg(2+). The ATP site is built by His-141, Lys-161, and Tyr-170. CTP-binding residues include His-141, Lys-161, and Tyr-170.

It belongs to the tRNA nucleotidyltransferase/poly(A) polymerase family. Archaeal CCA-adding enzyme subfamily. In terms of assembly, homodimer. Mg(2+) is required as a cofactor.

It catalyses the reaction a tRNA precursor + 2 CTP + ATP = a tRNA with a 3' CCA end + 3 diphosphate. It carries out the reaction a tRNA with a 3' CCA end + 2 CTP + ATP = a tRNA with a 3' CCACCA end + 3 diphosphate. In terms of biological role, catalyzes the addition and repair of the essential 3'-terminal CCA sequence in tRNAs without using a nucleic acid template. Adds these three nucleotides in the order of C, C, and A to the tRNA nucleotide-73, using CTP and ATP as substrates and producing inorganic pyrophosphate. tRNA 3'-terminal CCA addition is required both for tRNA processing and repair. Also involved in tRNA surveillance by mediating tandem CCA addition to generate a CCACCA at the 3' terminus of unstable tRNAs. While stable tRNAs receive only 3'-terminal CCA, unstable tRNAs are marked with CCACCA and rapidly degraded. This Pyrobaculum islandicum (strain DSM 4184 / JCM 9189 / GEO3) protein is CCA-adding enzyme.